A 349-amino-acid chain; its full sequence is Prostaglandin reductase 1 (349 aa).

T18 bears the Phosphothreonine mark. S20 bears the Phosphoserine mark. Residues 152–155 (GAVG), K178, Y193, N217, 239–245 (CGAISMY), 270–272 (FIF), and N321 each bind NADP(+). K178 carries the post-translational modification N6-(2-hydroxyisobutyryl)lysine; alternate. K178 is modified (N6-acetyllysine; alternate).

It belongs to the NADP-dependent oxidoreductase L4BD family. Monomer or homodimer.

It is found in the cytoplasm. It carries out the reaction 13,14-dihydro-15-oxo-prostaglandin E1 + NADP(+) = 15-oxoprostaglandin E1 + NADPH + H(+). The catalysed reaction is 13,14-dihydro-15-oxo-prostaglandin E2 + NADP(+) = 15-oxoprostaglandin E2 + NADPH + H(+). It catalyses the reaction 13,14-dihydro-15-oxo-prostaglandin F1alpha + NADP(+) = 15-oxoprostaglandin F1alpha + NADPH + H(+). The enzyme catalyses 13,14-dihydro-15-oxo-PGF2alpha + NADP(+) = 15-oxoprostaglandin F2alpha + NADPH + H(+). It carries out the reaction leukotriene B4 + NADP(+) = 12-oxo-leukotriene B4 + NADPH + H(+). The catalysed reaction is 20-hydroxy-leukotriene B4 + NADP(+) = 12-oxo-20-hydroxy-leukotriene B4 + NADPH + H(+). It catalyses the reaction 6-trans-leukotriene B4 + NADP(+) = 12-oxo-(5S)-hydroxy-(6E,8E,10E,14Z)-eicosatetraenoate + NADPH + H(+). The enzyme catalyses (5S,12S)-dihydroxy-(6E,10E,12E,14Z)-eicosatetraenoate + NADP(+) = 12-oxo-(5S)-hydroxy-(6E,8E,10E,14Z)-eicosatetraenoate + NADPH + H(+). It carries out the reaction an n-alkanal + NADP(+) = an alk-2-enal + NADPH + H(+). The catalysed reaction is hexanal + NADP(+) = (E)-hex-2-enal + NADPH + H(+). It catalyses the reaction octanal + NADP(+) = (2E)-octenal + NADPH + H(+). The enzyme catalyses decanal + NADP(+) = (2E)-decenal + NADPH + H(+). It carries out the reaction dodecanal + NADP(+) = (2E)-dodecenal + NADPH + H(+). The catalysed reaction is 4-hydroxynonanal + NADP(+) = (E)-4-hydroxynon-2-enal + NADPH + H(+). It catalyses the reaction pentan-2-one + NADP(+) = (E)-pent-3-en-2-one + NADPH + H(+). The enzyme catalyses nonan-2-one + NADP(+) = (3E)-nonen-2-one + NADPH + H(+). In terms of biological role, NAD(P)H-dependent oxidoreductase involved in metabolic inactivation of pro- and anti-inflammatory eicosanoids: prostaglandins (PG), leukotrienes (LT) and lipoxins (LX). Catalyzes with high efficiency the reduction of the 13,14 double bond of 15-oxoPGs, including 15-oxo-PGE1, 15-oxo-PGE2, 15-oxo-PGF1-alpha and 15-oxo-PGF2-alpha. Catalyzes with lower efficiency the oxidation of the hydroxyl group at C12 of LTB4 and its derivatives, converting them into biologically less active 12-oxo-LTB4 metabolites. Reduces 15-oxo-LXA4 to 13,14 dihydro-15-oxo-LXA4, enhancing neutrophil recruitment at the inflammatory site. Plays a role in metabolic detoxification of alkenals and ketones. Reduces alpha,beta-unsaturated alkenals and ketones, particularly those with medium-chain length, showing highest affinity toward (2E)-decenal and (3E)-3-nonen-2-one. May inactivate 4-hydroxy-2-nonenal, a cytotoxic lipid constituent of oxidized low-density lipoprotein particles. This chain is Prostaglandin reductase 1 (PTGR1), found in Oryctolagus cuniculus (Rabbit).